We begin with the raw amino-acid sequence, 444 residues long: Argininosuccinate synthase (444 aa).

ATP contacts are provided by residues 17-25 (AFSGGLDTS) and alanine 43. Tyrosine 99 contributes to the L-citrulline binding site. Glycine 129 and threonine 131 together coordinate ATP. L-aspartate is bound by residues threonine 131, asparagine 135, and aspartate 136. Asparagine 135 is a binding site for L-citrulline. ATP is bound at residue aspartate 136. The L-citrulline site is built by arginine 139 and serine 192. Aspartate 194 serves as a coordination point for ATP. L-citrulline contacts are provided by threonine 201, glutamate 203, and glutamate 280.

This sequence belongs to the argininosuccinate synthase family. Type 2 subfamily. Homotetramer.

The protein resides in the cytoplasm. The catalysed reaction is L-citrulline + L-aspartate + ATP = 2-(N(omega)-L-arginino)succinate + AMP + diphosphate + H(+). Its pathway is amino-acid biosynthesis; L-arginine biosynthesis; L-arginine from L-ornithine and carbamoyl phosphate: step 2/3. The protein is Argininosuccinate synthase of Delftia acidovorans (strain DSM 14801 / SPH-1).